The sequence spans 290 residues: 4-hydroxybenzoate octaprenyltransferase (290 aa).

9 helical membrane passes run 23 to 43 (IGTE…SDGY), 46 to 66 (LKMF…GCAI), 96 to 116 (AIWV…FLPI), 118 to 138 (TFYW…MKRY), 141 to 161 (LPQV…YTAT), 169 to 189 (CWLL…QYAI), 212 to 232 (IPII…ALYI), 235 to 255 (LLFP…IYQW), and 265 to 285 (LCFW…LAIL).

It belongs to the UbiA prenyltransferase family. Mg(2+) is required as a cofactor.

The protein resides in the cell inner membrane. The catalysed reaction is all-trans-octaprenyl diphosphate + 4-hydroxybenzoate = 4-hydroxy-3-(all-trans-octaprenyl)benzoate + diphosphate. It functions in the pathway cofactor biosynthesis; ubiquinone biosynthesis. Catalyzes the prenylation of para-hydroxybenzoate (PHB) with an all-trans polyprenyl group. Mediates the second step in the final reaction sequence of ubiquinone-8 (UQ-8) biosynthesis, which is the condensation of the polyisoprenoid side chain with PHB, generating the first membrane-bound Q intermediate 3-octaprenyl-4-hydroxybenzoate. This Acinetobacter baylyi (strain ATCC 33305 / BD413 / ADP1) protein is 4-hydroxybenzoate octaprenyltransferase.